Consider the following 268-residue polypeptide: Glutamine amidotransferase-like class 1 domain-containing protein 3, mitochondrial (268 aa).

The transit peptide at methionine 1–proline 41 directs the protein to the mitochondrion. An N6-acetyllysine mark is found at lysine 151, lysine 157, and lysine 164. Lysine 203 carries the post-translational modification N6-acetyllysine; alternate. Residue lysine 203 is modified to N6-succinyllysine; alternate. N6-acetyllysine is present on lysine 219. Lysine 223 and lysine 233 each carry N6-acetyllysine; alternate. 2 positions are modified to N6-succinyllysine; alternate: lysine 223 and lysine 233.

Belongs to the GATD3 family.

Its subcellular location is the mitochondrion. The polypeptide is Glutamine amidotransferase-like class 1 domain-containing protein 3, mitochondrial (Homo sapiens (Human)).